Reading from the N-terminus, the 83-residue chain is Small proline-rich protein 2A3 (83 aa).

5 consecutive repeat copies span residues 21–29 (PKCPEPCPP), 30–38 (QVWPGPCRP), 39–47 (VMCFEPCLP), 48–56 (SVWPGPCRP), and 57–65 (VVCYEQCPP). Positions 21-65 (PKCPEPCPPQVWPGPCRPVMCFEPCLPSVWPGPCRPVVCYEQCPP) are 5 X 9 AA approximate tandem repeats.

The protein belongs to the cornifin (SPRR) family. Post-translationally, forms five pairs of intrachain disulfide bonds.

It is found in the secreted. It localises to the extracellular space. The protein localises to the cytoplasmic vesicle. The protein resides in the secretory vesicle. In terms of biological role, gut bactericidal protein that selectively kills Gram-positive bacteria by binding to negatively charged lipids on bacterial membranes, leading to bacterial membrane permeabilization and disruption. Specifically binds lipids bearing negatively charged headgroups, such as phosphatidic acid, phosphatidylserine (PS), cardiolipin (CL), and phosphatidylinositol phosphates, but not to zwitterionic or neutral lipids. Induced by type-2 cytokines in response to helminth infection and is required to protect against helminth-induced bacterial invasion of intestinal tissue. May also be involved in the development of the cornified envelope of squamous epithelia; however, additional evidences are required to confirm this result in vivo. This is Small proline-rich protein 2A3 from Mus musculus (Mouse).